Here is a 284-residue protein sequence, read N- to C-terminus: Tropomyosin (284 aa).

Residues 1 to 284 (MDSIKKKMMA…DTTFAELTSF (284 aa)) adopt a coiled-coil conformation. A disordered region spans residues 97–140 (EDFEQSSGRLTETSTKLDDASKAAEESERNRKTLETRSISDDER). Polar residues predominate over residues 101 to 110 (QSSGRLTETS). The segment covering 111-140 (TKLDDASKAAEESERNRKTLETRSISDDER) has biased composition (basic and acidic residues).

The protein belongs to the tropomyosin family. Homodimer.

Functionally, tropomyosin, in association with the troponin complex, plays a central role in the calcium dependent regulation of muscle contraction. The sequence is that of Tropomyosin from Echinococcus multilocularis (Fox tapeworm).